The chain runs to 105 residues: uncharacterized protein (105 aa).

Residues 58–105 (YRKKKPNHSRDNPRINSNLSTNYAQAKSVERSRSNSLNSGPNPLENAT) are disordered. 2 stretches are compositionally biased toward polar residues: residues 71-82 (RINSNLSTNYAQ) and 91-105 (SNSL…ENAT).

The protein localises to the mitochondrion. This is an uncharacterized protein from Arabidopsis thaliana (Mouse-ear cress).